A 764-amino-acid polypeptide reads, in one-letter code: Thyrotropin receptor (764 aa).

Positions 1–20 (MRPADLLQLVLLLDLPRDLG) are cleaved as a signal peptide. Residues 21 to 413 (GMGCSSPPCE…EFNPCEDIMG (393 aa)) lie on the Extracellular side of the membrane. Cysteines 31 and 41 form a disulfide. 3 N-linked (GlcNAc...) asparagine glycosylation sites follow: Asn77, Asn99, and Asn113. 7 LRR repeats span residues 100–124 (LSKV…ALKE), 125–150 (LPLL…VYST), 152–174 (IFFI…AFQG), 176–199 (CNET…AFNG), 200–223 (TKLD…AFGG), 227–248 (GPSL…GLEH), and 250–271 (KELI…SFLH). Residues Asn177 and Asn198 are each glycosylated (N-linked (GlcNAc...) asparagine). The N-linked (GlcNAc...) asparagine glycan is linked to Asn302. Tyr385 bears the Sulfotyrosine mark. The chain crosses the membrane as a helical span at residues 414 to 441 (YKFLRIVVWFVSLLALLGNVFVLLILLT). Topologically, residues 442–450 (SHYKLNVPR) are cytoplasmic. Residues 451 to 473 (FLMCNLAFADFCMGMYLLLIASV) traverse the membrane as a helical segment. The Extracellular segment spans residues 474 to 494 (DLYTHSEYYNHAIDWQTGPGC). Residues Cys494 and Cys569 are joined by a disulfide bond. The helical transmembrane segment at 495–517 (NTAGFFTVFASELSVYTLTVITL) threads the bilayer. Topologically, residues 518–537 (ERWYAITFAMRLDRKIRLRH) are cytoplasmic. Residues 538–560 (ACAIMVGGWVCCFLLALLPLVGI) traverse the membrane as a helical segment. Topologically, residues 561–580 (SSYAKVSICLPMDTETPLAL) are extracellular. Residues 581 to 602 (AYIVFVLTLNIVAFVIVCCCYV) form a helical membrane-spanning segment. Residues 603 to 625 (KIYITVRNPQYNPGDKDTKIAKR) are Cytoplasmic-facing. Residues 626–649 (MAVLIFTDFICMAPISFYALSAIL) form a helical membrane-spanning segment. Residues 650-660 (NKPLITVSNSK) lie on the Extracellular side of the membrane. A helical transmembrane segment spans residues 661–682 (ILLVLFYPLNSCANPFLYAIFT). Residues 683-764 (KAFQRDVFIL…ISEEYMQTVL (82 aa)) lie on the Cytoplasmic side of the membrane. The short motif at 762 to 764 (TVL) is the PDZ-binding element.

Belongs to the G-protein coupled receptor 1 family. FSH/LSH/TSH subfamily. Interacts with heterodimer GPHA2:GPHB5; this interaction stimulates cAMP production. Interacts (via the PDZ-binding motif) with SCRIB; regulates TSHR trafficking and function. Post-translationally, glycosylated. Sulfated. Sulfation on Tyr-385 plays a role in thyrotropin receptor binding and activation. As to expression, expressed in thyroide cells (at protein level). Expressed in the thyroid.

Its subcellular location is the cell membrane. It localises to the basolateral cell membrane. Functionally, receptor for the thyroid-stimulating hormone (TSH) or thyrotropin. Also acts as a receptor for the heterodimeric glycoprotein hormone (GPHA2:GPHB5) or thyrostimulin. The activity of this receptor is mediated by G proteins which activate adenylate cyclase. Plays a central role in controlling thyroid cell metabolism. The polypeptide is Thyrotropin receptor (TSHR) (Homo sapiens (Human)).